The following is a 135-amino-acid chain: Cytochrome c2 (135 aa).

The signal sequence occupies residues 1 to 23 (MKKGFLAAGVFAAVAFASGAALA). Heme c-binding residues include Cys-37, Cys-40, His-41, and Met-114.

Belongs to the cytochrome c family. In terms of processing, binds 1 heme c group covalently per subunit.

Cytochrome c2 is found mainly in purple, non-sulfur, photosynthetic bacteria where it functions as the electron donor to the oxidized bacteriochlorophyll in the photophosphorylation pathway. However, it may also have a role in the respiratory chain and is found in some non-photosynthetic bacteria. This Rhodospirillum rubrum (strain ATCC 11170 / ATH 1.1.1 / DSM 467 / LMG 4362 / NCIMB 8255 / S1) protein is Cytochrome c2 (cycA).